Here is a 439-residue protein sequence, read N- to C-terminus: 3-phosphoshikimate 1-carboxyvinyltransferase (439 aa).

Residues K27, S28, and R32 each coordinate 3-phosphoshikimate. K27 is a binding site for phosphoenolpyruvate. Residues G101 and R130 each coordinate phosphoenolpyruvate. 4 residues coordinate 3-phosphoshikimate: S175, Q177, D326, and K353. Position 177 (Q177) interacts with phosphoenolpyruvate. The Proton acceptor role is filled by D326. The phosphoenolpyruvate site is built by R357 and R399.

Belongs to the EPSP synthase family. As to quaternary structure, monomer.

The protein resides in the cytoplasm. The enzyme catalyses 3-phosphoshikimate + phosphoenolpyruvate = 5-O-(1-carboxyvinyl)-3-phosphoshikimate + phosphate. The protein operates within metabolic intermediate biosynthesis; chorismate biosynthesis; chorismate from D-erythrose 4-phosphate and phosphoenolpyruvate: step 6/7. Catalyzes the transfer of the enolpyruvyl moiety of phosphoenolpyruvate (PEP) to the 5-hydroxyl of shikimate-3-phosphate (S3P) to produce enolpyruvyl shikimate-3-phosphate and inorganic phosphate. This Synechococcus sp. (strain WH7803) protein is 3-phosphoshikimate 1-carboxyvinyltransferase.